The following is a 60-amino-acid chain: ALYITEECTYCGACEPECPVTAISAGDDIYVIDANTCNECAGLDEQACVAVCPAECIVQG.

2 consecutive 4Fe-4S ferredoxin-type domains span residues 2 to 27 (LYIT…SAGD) and 28 to 60 (DIYV…IVQG). Residues Cys-8, Cys-11, Cys-14, Cys-18, Cys-37, Cys-40, Cys-48, and Cys-52 each coordinate [4Fe-4S] cluster.

Requires [4Fe-4S] cluster as cofactor.

Ferredoxins are iron-sulfur proteins that transfer electrons in a wide variety of metabolic reactions. The chain is Ferredoxin-1 from Chlorobium limicola.